The primary structure comprises 415 residues: AP-3 complex subunit mu (415 aa).

The MHD domain occupies Ser178–Arg414.

This sequence belongs to the adaptor complexes medium subunit family. As to quaternary structure, adaptor protein complex 3 (AP-3) is a heterotetramer composed of two large adaptins (delta-type subunit and beta-type subunit), a medium adaptin (mu-type subunit) and a small adaptin (sigma-type subunit).

It is found in the cytoplasm. The protein resides in the golgi apparatus. The protein localises to the cytoplasmic vesicle membrane. Its function is as follows. Part of the AP-3 complex, an adaptor-related complex which seems to be clathrin-associated. The complex is associated with the Golgi region as well as more peripheral structures. It facilitates the budding of vesicles from the Golgi membrane and may be directly involved in trafficking to the vacuole. It also functions in maintaining the identity of lytic vacuoles and in regulating the transition between storage and lytic vacuoles. The sequence is that of AP-3 complex subunit mu (AP3M) from Arabidopsis thaliana (Mouse-ear cress).